A 113-amino-acid polypeptide reads, in one-letter code: Small ribosomal subunit protein bS6 (113 aa).

Belongs to the bacterial ribosomal protein bS6 family.

Binds together with bS18 to 16S ribosomal RNA. This chain is Small ribosomal subunit protein bS6, found in Flavobacterium johnsoniae (strain ATCC 17061 / DSM 2064 / JCM 8514 / BCRC 14874 / CCUG 350202 / NBRC 14942 / NCIMB 11054 / UW101) (Cytophaga johnsonae).